The sequence spans 341 residues: L-threonine 3-dehydrogenase (341 aa).

Cys38 contacts Zn(2+). Catalysis depends on charge relay system residues Thr40 and His43. His63, Glu64, Cys93, Cys96, Cys99, and Cys107 together coordinate Zn(2+). NAD(+) contacts are provided by residues Ile175, Asp195, Arg200, 262-264 (LGI), and 286-287 (IY).

This sequence belongs to the zinc-containing alcohol dehydrogenase family. Homotetramer. The cofactor is Zn(2+).

The protein localises to the cytoplasm. The enzyme catalyses L-threonine + NAD(+) = (2S)-2-amino-3-oxobutanoate + NADH + H(+). It participates in amino-acid degradation; L-threonine degradation via oxydo-reductase pathway; glycine from L-threonine: step 1/2. In terms of biological role, catalyzes the NAD(+)-dependent oxidation of L-threonine to 2-amino-3-ketobutyrate. The sequence is that of L-threonine 3-dehydrogenase from Chromobacterium violaceum (strain ATCC 12472 / DSM 30191 / JCM 1249 / CCUG 213 / NBRC 12614 / NCIMB 9131 / NCTC 9757 / MK).